The primary structure comprises 498 residues: ATP synthase subunit beta, chloroplastic (498 aa).

Position 172–179 (172–179 (GGAGVGKT)) interacts with ATP.

Belongs to the ATPase alpha/beta chains family. As to quaternary structure, F-type ATPases have 2 components, CF(1) - the catalytic core - and CF(0) - the membrane proton channel. CF(1) has five subunits: alpha(3), beta(3), gamma(1), delta(1), epsilon(1). CF(0) has four main subunits: a(1), b(1), b'(1) and c(9-12).

The protein resides in the plastid. Its subcellular location is the chloroplast thylakoid membrane. The enzyme catalyses ATP + H2O + 4 H(+)(in) = ADP + phosphate + 5 H(+)(out). Functionally, produces ATP from ADP in the presence of a proton gradient across the membrane. The catalytic sites are hosted primarily by the beta subunits. This chain is ATP synthase subunit beta, chloroplastic, found in Nicotiana tabacum (Common tobacco).